The sequence spans 353 residues: Peptide-N(4)-(N-acetyl-beta-glucosaminyl)asparagine amidase (353 aa).

3 residues coordinate Zn(2+): C125, C128, and C159. C185 (nucleophile) is an active-site residue. Active-site residues include H212 and D229. E232 is a substrate binding site. The disordered stretch occupies residues 316-353; sequence SLEKTKPSKDTSTTTLTGTKGRESGSTAWKQQRGEDGS. The segment covering 325–334 has biased composition (low complexity); that stretch reads DTSTTTLTGT.

This sequence belongs to the transglutaminase-like superfamily. PNGase family. It depends on Zn(2+) as a cofactor.

The protein resides in the cytoplasm. The enzyme catalyses Hydrolysis of an N(4)-(acetyl-beta-D-glucosaminyl)asparagine residue in which the glucosamine residue may be further glycosylated, to yield a (substituted) N-acetyl-beta-D-glucosaminylamine and a peptide containing an aspartate residue.. Functionally, specifically deglycosylates the denatured form of N-linked glycoproteins in the cytoplasm and assists their proteasome-mediated degradation. Cleaves the beta-aspartyl-glucosamine (GlcNAc) of the glycan and the amide side chain of Asn, converting Asn to Asp. Prefers proteins containing high-mannose over those bearing complex type oligosaccharides. Can recognize misfolded proteins in the endoplasmic reticulum that are exported to the cytosol to be destroyed and deglycosylate them, while it has no activity toward native proteins. Deglycosylation is a prerequisite for subsequent proteasome-mediated degradation of some, but not all, misfolded glycoproteins. The protein is Peptide-N(4)-(N-acetyl-beta-glucosaminyl)asparagine amidase (PNG1) of Kluyveromyces lactis (strain ATCC 8585 / CBS 2359 / DSM 70799 / NBRC 1267 / NRRL Y-1140 / WM37) (Yeast).